The chain runs to 407 residues: MLRWTTAGESHGQALIATVEHMPAGVPVTKDEVSYQLARRRLGYGRGARMKFEQDALTFLTGIRHGLTLGSPISIMIGNTEWDKWTTIMSSDALDMEDPDNVAAMSSGRGAKLTRPRPGHADYAGMLKYGFDDARNVLERSSARETAARVAAATVARSFLRETLGVEVLSHVISIGASEPYVGAEPTFADIQAIDDSPVRAFGKDAEKSMIAEIEAAKKAGDTLGGIVEVIVEGLPIGLGSHISGEDRLDAQIAAALMGIQAIKGVEIGDGFEEARRRGSEAHDEVFLDDNGVYRNTNRAGGLEGGMTNGETLRVRAGMKPISTVPRALKTIDMENGKAATGIHQRSDVCAVPAAGVVAEAMVTLVLARAVLQKFGGDSLSETKSNIDTYLKNIEERMKFEGLEDGA.

Arginine 40 and arginine 46 together coordinate NADP(+). Residues 140–142 (RSS), 261–262 (QA), glycine 305, 320–324 (KPIST), and arginine 346 contribute to the FMN site.

The protein belongs to the chorismate synthase family. Homotetramer. The cofactor is FMNH2.

The catalysed reaction is 5-O-(1-carboxyvinyl)-3-phosphoshikimate = chorismate + phosphate. It participates in metabolic intermediate biosynthesis; chorismate biosynthesis; chorismate from D-erythrose 4-phosphate and phosphoenolpyruvate: step 7/7. Catalyzes the anti-1,4-elimination of the C-3 phosphate and the C-6 proR hydrogen from 5-enolpyruvylshikimate-3-phosphate (EPSP) to yield chorismate, which is the branch point compound that serves as the starting substrate for the three terminal pathways of aromatic amino acid biosynthesis. This reaction introduces a second double bond into the aromatic ring system. The chain is Chorismate synthase from Corynebacterium glutamicum (strain R).